The following is a 452-amino-acid chain: uncharacterized protein (452 aa).

Positions 1–452 (MTAVSSNRNP…LRKPEADTAL (452 aa)) are disordered. Polar residues-rich tracts occupy residues 29–41 (RTGTPRTTAVSSN), 95–111 (SPQTGTPRTTAVSSNRN), 129–144 (SPQTGTPGTTAVSSNR), and 163–176 (SPQTGTPGTTAVSS). A compositionally biased stretch (basic and acidic residues) spans 177 to 193 (NRDHEDDGCLLKQESRG). Polar residues-rich tracts occupy residues 197–212 (SPQTGTPGTTAVSSNR), 231–245 (SPQTGTPGTTAVSSN), 265–280 (SPQTGTPRTTAVSSNR), 299–314 (SPQTGIPRTTAVSSNR), 333–347 (SPQTGTTRTTAVSSK), 376–394 (TAVSSNRDPRTTAVSSNRN), and 412–426 (SPQTGTPGTTAVSSN). Positions 439 to 452 (EPQELRKPEADTAL) are enriched in basic and acidic residues.

This is an uncharacterized protein from Homo sapiens (Human).